A 236-amino-acid chain; its full sequence is Probable transcriptional activator protein TraR (236 aa).

An HTH luxR-type domain is found at 169-234 (VLNPKQMLSP…QLVAIAKDRG (66 aa)). A DNA-binding region (H-T-H motif) is located at residues 193–212 (ASVTANLTGINARTVQHYLD).

This sequence belongs to the autoinducer-regulated transcriptional regulatory protein family.

Positive regulation of conjugal transfer. TraR activates target genes in the presence of AAI and also activates traR and traI themselves. The polypeptide is Probable transcriptional activator protein TraR (traR) (Sinorhizobium fredii (strain NBRC 101917 / NGR234)).